The following is a 189-amino-acid chain: Xanthine phosphoribosyltransferase (189 aa).

Positions 20 and 27 each coordinate xanthine. 128–132 (ANGKA) contributes to the 5-phospho-alpha-D-ribose 1-diphosphate binding site. K156 serves as a coordination point for xanthine.

It belongs to the purine/pyrimidine phosphoribosyltransferase family. Xpt subfamily. As to quaternary structure, homodimer.

The protein localises to the cytoplasm. It carries out the reaction XMP + diphosphate = xanthine + 5-phospho-alpha-D-ribose 1-diphosphate. It functions in the pathway purine metabolism; XMP biosynthesis via salvage pathway; XMP from xanthine: step 1/1. Its function is as follows. Converts the preformed base xanthine, a product of nucleic acid breakdown, to xanthosine 5'-monophosphate (XMP), so it can be reused for RNA or DNA synthesis. This Pseudomonas syringae pv. syringae (strain B728a) protein is Xanthine phosphoribosyltransferase.